The following is a 413-amino-acid chain: MKIYLVGGAVRDALLGLPVKDKDWVVVGATPQEMLDAGYQQVGRDFPVFLHPQTHEEYALARTERKSGSGYTGFTCYAAPDVTLEADLQRRDLTINALARDDDGQIIDPYHGRRDLEARLLRHVSPAFGEDPLRVLRVARFAARYAHLSFRIADETLSLMRDMTAAGELEHLTPERVWKETENALTTRNPQVYFQVLRDCGALRVLFPEIDALFGVPAPAKWHPEIDTGVHTLMTLSMAAMLSPQLDVRFATLCHDLGKGLTPKNLWPRHHGHGPAGVKLVEQLCQRLRVPNDLRDLAKLVAEYHDLIHTFPILQPKTIVKLFDAIDAWRKPQRVEQIALTSEADVRGRTGFEASDYPQGRWLREAWQVAQAVSTKEVVEAGFKGIEIREELTKRRIAAVANWKEKRCPNPAS.

Gly-8 and Arg-11 together coordinate ATP. CTP is bound by residues Gly-8 and Arg-11. Mg(2+) contacts are provided by Asp-21 and Asp-23. ATP-binding residues include Arg-91, Arg-137, and Arg-140. CTP contacts are provided by Arg-91, Arg-137, and Arg-140. The HD domain maps to 228–329 (TGVHTLMTLS…VKLFDAIDAW (102 aa)).

This sequence belongs to the tRNA nucleotidyltransferase/poly(A) polymerase family. Bacterial CCA-adding enzyme type 1 subfamily. In terms of assembly, monomer. Can also form homodimers and oligomers. Requires Mg(2+) as cofactor. Ni(2+) serves as cofactor.

The enzyme catalyses a tRNA precursor + 2 CTP + ATP = a tRNA with a 3' CCA end + 3 diphosphate. It carries out the reaction a tRNA with a 3' CCA end + 2 CTP + ATP = a tRNA with a 3' CCACCA end + 3 diphosphate. Its function is as follows. Catalyzes the addition and repair of the essential 3'-terminal CCA sequence in tRNAs without using a nucleic acid template. Adds these three nucleotides in the order of C, C, and A to the tRNA nucleotide-73, using CTP and ATP as substrates and producing inorganic pyrophosphate. tRNA 3'-terminal CCA addition is required both for tRNA processing and repair. Also involved in tRNA surveillance by mediating tandem CCA addition to generate a CCACCA at the 3' terminus of unstable tRNAs. While stable tRNAs receive only 3'-terminal CCA, unstable tRNAs are marked with CCACCA and rapidly degraded. The polypeptide is Multifunctional CCA protein (Salmonella schwarzengrund (strain CVM19633)).